A 193-amino-acid chain; its full sequence is Potassium-transporting ATPase KdpC subunit (193 aa).

Residues 7–27 (PMIVIFAVLAALTGLAYPAVM) form a helical membrane-spanning segment.

This sequence belongs to the KdpC family. The system is composed of three essential subunits: KdpA, KdpB and KdpC.

The protein localises to the cell inner membrane. Functionally, part of the high-affinity ATP-driven potassium transport (or Kdp) system, which catalyzes the hydrolysis of ATP coupled with the electrogenic transport of potassium into the cytoplasm. This subunit acts as a catalytic chaperone that increases the ATP-binding affinity of the ATP-hydrolyzing subunit KdpB by the formation of a transient KdpB/KdpC/ATP ternary complex. The protein is Potassium-transporting ATPase KdpC subunit of Paraburkholderia phymatum (strain DSM 17167 / CIP 108236 / LMG 21445 / STM815) (Burkholderia phymatum).